The following is a 261-amino-acid chain: Type III pantothenate kinase (261 aa).

7–14 (EQGNTNTM) is an ATP binding site. 108-111 (GADR) contacts substrate. Residue aspartate 110 is the Proton acceptor of the active site. Aspartate 130 contributes to the K(+) binding site. Residue threonine 133 coordinates ATP. Threonine 187 serves as a coordination point for substrate.

This sequence belongs to the type III pantothenate kinase family. Homodimer. The cofactor is NH4(+). It depends on K(+) as a cofactor.

It localises to the cytoplasm. The catalysed reaction is (R)-pantothenate + ATP = (R)-4'-phosphopantothenate + ADP + H(+). Its pathway is cofactor biosynthesis; coenzyme A biosynthesis; CoA from (R)-pantothenate: step 1/5. Its function is as follows. Catalyzes the phosphorylation of pantothenate (Pan), the first step in CoA biosynthesis. The chain is Type III pantothenate kinase from Caulobacter vibrioides (strain ATCC 19089 / CIP 103742 / CB 15) (Caulobacter crescentus).